The following is a 102-amino-acid chain: Large ribosomal subunit protein uL24 (102 aa).

It belongs to the universal ribosomal protein uL24 family. Part of the 50S ribosomal subunit.

Its function is as follows. One of two assembly initiator proteins, it binds directly to the 5'-end of the 23S rRNA, where it nucleates assembly of the 50S subunit. Functionally, one of the proteins that surrounds the polypeptide exit tunnel on the outside of the subunit. This Lysinibacillus sphaericus (strain C3-41) protein is Large ribosomal subunit protein uL24.